Consider the following 290-residue polypeptide: Agglutinin-2 (290 aa).

A signal peptide spans M1 to S35. A glycan (N-linked (GlcNAc...) asparagine) is linked at N155. Mn(2+)-binding residues include E165 and D167. D167, N171, and D175 together coordinate Ca(2+). 2 residues coordinate Mn(2+): D175 and H180. The N-linked (GlcNAc...) asparagine glycan is linked to N200.

Belongs to the leguminous lectin family. As to quaternary structure, homotetramer.

Its function is as follows. Mannose/glucose binding bark lectin. Bark lectins are storage proteins that probably maintain stocks of nitrogen during dormant period. Self-aggregatable molecules that can bind their own carbohydrate side chains. They could also play a role in the plant's defense against phytophagous invertebrates or herbivorous higher animals. The protein is Agglutinin-2 of Cladrastis kentukea (Yellow wood).